The following is a 104-amino-acid chain: Large ribosomal subunit protein bL21 (104 aa).

Positions 78–91 (KRRRQNSRRKRGHR) are enriched in basic residues. The interval 78-104 (KRRRQNSRRKRGHRQDHTVVRITGISA) is disordered.

This sequence belongs to the bacterial ribosomal protein bL21 family. As to quaternary structure, part of the 50S ribosomal subunit. Contacts protein L20.

This protein binds to 23S rRNA in the presence of protein L20. In Methylobacterium radiotolerans (strain ATCC 27329 / DSM 1819 / JCM 2831 / NBRC 15690 / NCIMB 10815 / 0-1), this protein is Large ribosomal subunit protein bL21.